The chain runs to 122 residues: Large ribosomal subunit protein bL12 (122 aa).

The protein belongs to the bacterial ribosomal protein bL12 family. In terms of assembly, homodimer. Part of the ribosomal stalk of the 50S ribosomal subunit. Forms a multimeric L10(L12)X complex, where L10 forms an elongated spine to which 2 to 4 L12 dimers bind in a sequential fashion. Binds GTP-bound translation factors.

Forms part of the ribosomal stalk which helps the ribosome interact with GTP-bound translation factors. Is thus essential for accurate translation. The polypeptide is Large ribosomal subunit protein bL12 (Mycoplasma mycoides subsp. mycoides SC (strain CCUG 32753 / NCTC 10114 / PG1)).